The sequence spans 307 residues: Glycerol-3-phosphate dehydrogenase [NAD(P)+] (307 aa).

NADPH is bound by residues tryptophan 14, arginine 34, arginine 35, and lysine 82. Residues lysine 82 and glycine 110 each coordinate sn-glycerol 3-phosphate. Serine 114 is a binding site for NADPH. Sn-glycerol 3-phosphate-binding residues include lysine 165, aspartate 218, serine 228, arginine 229, and asparagine 230. Lysine 165 serves as the catalytic Proton acceptor. Arginine 229 serves as a coordination point for NADPH. Glutamate 255 is an NADPH binding site.

Belongs to the NAD-dependent glycerol-3-phosphate dehydrogenase family.

Its subcellular location is the cytoplasm. The enzyme catalyses sn-glycerol 3-phosphate + NAD(+) = dihydroxyacetone phosphate + NADH + H(+). It carries out the reaction sn-glycerol 3-phosphate + NADP(+) = dihydroxyacetone phosphate + NADPH + H(+). It functions in the pathway membrane lipid metabolism; glycerophospholipid metabolism. In terms of biological role, catalyzes the reduction of the glycolytic intermediate dihydroxyacetone phosphate (DHAP) to sn-glycerol 3-phosphate (G3P), the key precursor for phospholipid synthesis. This Nostoc sp. (strain PCC 7120 / SAG 25.82 / UTEX 2576) protein is Glycerol-3-phosphate dehydrogenase [NAD(P)+].